The sequence spans 421 residues: MKQNIFKSIADLRFAIFILLVIAAFSVIGTVIEQDQSIETYKLNYPLTNRVFGFLSWDIILKFGLDHVYKTWWFITLILLFGISLLTCTLLQQFPSLKIARRCQFFRTTQQFCRLNISTNLKHLSFSQLLFKIKENNYSIFQQKNIIYCYKGLIGRIAPIIVHFSMIIILIGAIIGSLSGFKAQEIVPKTETFHIQNVLNNGQFTFIPKVSVRINDFWITYTKQTTITQFYSDLSILNIDGNEIDRQTIFVNSPAKYNGIDYYQTDWNIIGLRLRMQDSSIFQYPFINLPNTQEKLWLTWISTNQQLNDGLTILIDNLQGYCSVYNKVGKFIGNLELNESLKIENPITLIDILSSTGLQIKADPGILLIYLGFLFLMISTLISYITYSQIWIVQDKNKIFIGGNTTRATFEFELEFLKLIK.

The next 3 helical transmembrane spans lie at 12 to 32, 71 to 91, and 157 to 177; these read LRFA…GTVI, TWWF…CTLL, and IAPI…IIGS.

Belongs to the Ccs1/CcsB family. May interact with CcsA.

Its subcellular location is the plastid. The protein resides in the chloroplast thylakoid membrane. In terms of biological role, required during biogenesis of c-type cytochromes (cytochrome c6 and cytochrome f) at the step of heme attachment. The sequence is that of Cytochrome c biogenesis protein Ccs1 from Thalassiosira pseudonana (Marine diatom).